The sequence spans 171 residues: Shikimate kinase (171 aa).

14–19 (GAGKST) serves as a coordination point for ATP. Residue Ser18 participates in Mg(2+) binding. Substrate contacts are provided by Asp36, Arg60, and Gly82. Arg120 contacts ATP. Substrate is bound at residue Arg139. Gln156 is a binding site for ATP.

It belongs to the shikimate kinase family. In terms of assembly, monomer. It depends on Mg(2+) as a cofactor.

It localises to the cytoplasm. The enzyme catalyses shikimate + ATP = 3-phosphoshikimate + ADP + H(+). Its pathway is metabolic intermediate biosynthesis; chorismate biosynthesis; chorismate from D-erythrose 4-phosphate and phosphoenolpyruvate: step 5/7. Catalyzes the specific phosphorylation of the 3-hydroxyl group of shikimic acid using ATP as a cosubstrate. The sequence is that of Shikimate kinase from Shewanella oneidensis (strain ATCC 700550 / JCM 31522 / CIP 106686 / LMG 19005 / NCIMB 14063 / MR-1).